We begin with the raw amino-acid sequence, 350 residues long: Arginine N-succinyltransferase (350 aa).

Leu125 contacts succinyl-CoA. The Proton donor role is filled by His229.

The protein belongs to the arginine N-succinyltransferase family.

The catalysed reaction is succinyl-CoA + L-arginine = N(2)-succinyl-L-arginine + CoA + H(+). Its pathway is amino-acid degradation; L-arginine degradation via AST pathway; L-glutamate and succinate from L-arginine: step 1/5. In terms of biological role, catalyzes the transfer of succinyl-CoA to arginine to produce N(2)-succinylarginine. In Yersinia pestis, this protein is Arginine N-succinyltransferase.